The chain runs to 250 residues: MNLKITINQQASISEKLIIANLEQLLIFRDNTFNKIDCDQQITLKDAVQISQILNDQGVLNYEGEINEQITTYLEACGLYSQGQGQFIKRTLQTKKINIPQQDFNNCYGKYDYIEQKFQNQINFFKQVDLKGNQETIDENELLNDGVEVKQVESCASKPRACANCTCGRKEMEEKQDKEQLLEQLKNNSVKGCGSCYLGDAFRCANCPFRGLPAFKDGEQVKVLQDDVFLKEKEETDQIKLENGKVKLMI.

Residues 1–102 form an N-terminal SAM-like domain region; it reads MNLKITINQQ…QTKKINIPQQ (102 aa). A linker region spans residues 102-149; the sequence is QDFNNCYGKYDYIEQKFQNQINFFKQVDLKGNQETIDENELLNDGVEV. [2Fe-2S] cluster is bound by residues Cys155, Cys162, Cys165, and Cys167. Residues 155–167 form a fe-S binding site A region; it reads CASKPRACANCTC. The [4Fe-4S] cluster site is built by Cys193, Cys196, Cys204, and Cys207. 2 consecutive short sequence motifs (cx2C motif) follow at residues 193–196 and 204–207; these read CGSC and CANC. The tract at residues 193–207 is fe-S binding site B; that stretch reads CGSCYLGDAFRCANC.

This sequence belongs to the anamorsin family. As to quaternary structure, monomer. Requires [2Fe-2S] cluster as cofactor. [4Fe-4S] cluster serves as cofactor.

Its subcellular location is the cytoplasm. It localises to the mitochondrion intermembrane space. Component of the cytosolic iron-sulfur (Fe-S) protein assembly (CIA) machinery. Required for the maturation of extramitochondrial Fe-S proteins. Part of an electron transfer chain functioning in an early step of cytosolic Fe-S biogenesis, facilitating the de novo assembly of a [4Fe-4S] cluster on the cytosolic Fe-S scaffold complex. Electrons are transferred from NADPH via a FAD- and FMN-containing diflavin oxidoreductase. Together with the diflavin oxidoreductase, also required for the assembly of the diferric tyrosyl radical cofactor of ribonucleotide reductase (RNR), probably by providing electrons for reduction during radical cofactor maturation in the catalytic small subunit. The protein is Anamorsin homolog 2 of Paramecium tetraurelia.